The sequence spans 201 residues: Recombination protein RecR (201 aa).

A C4-type zinc finger spans residues 57–72 (CADCRTFTEQDVCNIC). Positions 81–176 (GQICVVESPA…EASRIAHGVP (96 aa)) constitute a Toprim domain.

Belongs to the RecR family.

Its function is as follows. May play a role in DNA repair. It seems to be involved in an RecBC-independent recombinational process of DNA repair. It may act with RecF and RecO. The chain is Recombination protein RecR from Salmonella choleraesuis (strain SC-B67).